The sequence spans 386 residues: DNA-directed RNA polymerase subunit Rpo1C (386 aa).

It belongs to the RNA polymerase beta' chain family. In terms of assembly, part of the RNA polymerase complex.

It is found in the cytoplasm. It carries out the reaction RNA(n) + a ribonucleoside 5'-triphosphate = RNA(n+1) + diphosphate. In terms of biological role, DNA-dependent RNA polymerase (RNAP) catalyzes the transcription of DNA into RNA using the four ribonucleoside triphosphates as substrates. Forms part of the jaw domain. The polypeptide is DNA-directed RNA polymerase subunit Rpo1C (Methanococcus maripaludis (strain C6 / ATCC BAA-1332)).